Reading from the N-terminus, the 118-residue chain is Small ribosomal subunit protein bS6 (118 aa).

The segment at Thr98 to Glu118 is disordered. The segment covering Ala99–Glu118 has biased composition (low complexity).

It belongs to the bacterial ribosomal protein bS6 family.

In terms of biological role, binds together with bS18 to 16S ribosomal RNA. The polypeptide is Small ribosomal subunit protein bS6 (Geobacter metallireducens (strain ATCC 53774 / DSM 7210 / GS-15)).